The sequence spans 65 residues: Large ribosomal subunit protein bL35 (65 aa).

The disordered stretch occupies residues 24–48 (RRKAGKSHLLEHKSSDKKRSMSKTT). The span at 31–42 (HLLEHKSSDKKR) shows a compositional bias: basic and acidic residues.

This sequence belongs to the bacterial ribosomal protein bL35 family.

This chain is Large ribosomal subunit protein bL35, found in Nostoc punctiforme (strain ATCC 29133 / PCC 73102).